The primary structure comprises 83 residues: UPF0147 protein TK2131 (83 aa).

The protein belongs to the UPF0147 family.

The protein is UPF0147 protein TK2131 of Thermococcus kodakarensis (strain ATCC BAA-918 / JCM 12380 / KOD1) (Pyrococcus kodakaraensis (strain KOD1)).